Consider the following 115-residue polypeptide: Large ribosomal subunit protein bL19 (115 aa).

It belongs to the bacterial ribosomal protein bL19 family.

Functionally, this protein is located at the 30S-50S ribosomal subunit interface and may play a role in the structure and function of the aminoacyl-tRNA binding site. The protein is Large ribosomal subunit protein bL19 of Finegoldia magna (strain ATCC 29328 / DSM 20472 / WAL 2508) (Peptostreptococcus magnus).